The primary structure comprises 380 residues: Tryptophan 2,3-dioxygenase (380 aa).

Substrate is bound by residues 57–61 (FIITH) and arginine 128. Histidine 313 is a heme binding site. Substrate is bound at residue threonine 328.

The protein belongs to the tryptophan 2,3-dioxygenase family. Homotetramer. Dimer of dimers. Heme serves as cofactor.

It catalyses the reaction L-tryptophan + O2 = N-formyl-L-kynurenine. It participates in amino-acid degradation; L-tryptophan degradation via kynurenine pathway; L-kynurenine from L-tryptophan: step 1/2. It functions in the pathway pigment biosynthesis; ommochrome biosynthesis. Heme-dependent dioxygenase that catalyzes the oxidative cleavage of the L-tryptophan (L-Trp) pyrrole ring and converts L-tryptophan to N-formyl-L-kynurenine. Catalyzes the oxidative cleavage of the indole moiety. The protein is Tryptophan 2,3-dioxygenase of Drosophila willistoni (Fruit fly).